Reading from the N-terminus, the 299-residue chain is F-actin-capping protein subunit alpha-3 (299 aa).

Phosphoserine occurs at positions 2 and 290.

The protein belongs to the F-actin-capping protein alpha subunit family. In terms of assembly, component of the F-actin capping complex, composed of a heterodimer of an alpha and a beta subunit. Component of the WASH complex, composed of F-actin-capping protein subunit alpha (CAPZA1, CAPZA2 or CAPZA3), F-actin-capping protein subunit beta (CAPZB), WASHC1, WASHC2, WASHC3, WASHC4 and WASHC5. Exclusively expressed in the testis.

The protein localises to the cytoplasm. It is found in the cytoskeleton. F-actin-capping proteins bind in a Ca(2+)-independent manner to the fast growing ends of actin filaments (barbed end) thereby blocking the exchange of subunits at these ends. Unlike other capping proteins (such as gelsolin and severin), these proteins do not sever actin filaments. May play a role in the morphogenesis of spermatid. The polypeptide is F-actin-capping protein subunit alpha-3 (Capza3) (Rattus norvegicus (Rat)).